Here is a 268-residue protein sequence, read N- to C-terminus: Tryptophan synthase alpha chain (268 aa).

Residues glutamate 49 and aspartate 60 each act as proton acceptor in the active site.

This sequence belongs to the TrpA family. In terms of assembly, tetramer of two alpha and two beta chains.

The catalysed reaction is (1S,2R)-1-C-(indol-3-yl)glycerol 3-phosphate + L-serine = D-glyceraldehyde 3-phosphate + L-tryptophan + H2O. It functions in the pathway amino-acid biosynthesis; L-tryptophan biosynthesis; L-tryptophan from chorismate: step 5/5. Functionally, the alpha subunit is responsible for the aldol cleavage of indoleglycerol phosphate to indole and glyceraldehyde 3-phosphate. The sequence is that of Tryptophan synthase alpha chain from Escherichia coli O6:H1 (strain CFT073 / ATCC 700928 / UPEC).